Here is a 595-residue protein sequence, read N- to C-terminus: Mitoguardin 1 (595 aa).

2 helical membrane passes run 11–31 and 38–58; these read LPIK…YYSL and TGTK…IIIA.

The protein belongs to the mitoguardin family. Homodimer and heterodimer; forms heterodimers with miga2.

The protein resides in the mitochondrion outer membrane. In terms of biological role, regulator of mitochondrial fusion: acts by forming homo- and heterodimers at the mitochondrial outer membrane and facilitating the formation of pld6/MitoPLD dimers. May act by regulating phospholipid metabolism via pld6/MitoPLD. This is Mitoguardin 1 from Danio rerio (Zebrafish).